Reading from the N-terminus, the 365-residue chain is Putative agmatine deiminase (365 aa).

C356 acts as the Amidino-cysteine intermediate in catalysis.

It belongs to the agmatine deiminase family.

The enzyme catalyses agmatine + H2O = N-carbamoylputrescine + NH4(+). In Latilactobacillus sakei subsp. sakei (strain 23K) (Lactobacillus sakei subsp. sakei), this protein is Putative agmatine deiminase.